Reading from the N-terminus, the 138-residue chain is Small ribosomal subunit protein bS18m (138 aa).

This sequence belongs to the bacterial ribosomal protein bS18 family. In terms of assembly, component of the mitochondrial small ribosomal subunit. Mature mitochondrial ribosomes consist of a small (37S) and a large (54S) subunit. The 37S subunit contains at least 33 different proteins and 1 molecule of RNA (15S). The 54S subunit contains at least 45 different proteins and 1 molecule of RNA (21S).

The protein resides in the mitochondrion. This is Small ribosomal subunit protein bS18m (RSM18) from Saccharomyces cerevisiae (strain RM11-1a) (Baker's yeast).